The chain runs to 1163 residues: Ankyrin repeat-containing protein F37A4.4 (1163 aa).

One copy of the ANK repeat lies at 856–885 (YGNTALHVATRRGYQNLVEILIKHGADRSF). One can recognise a BRCT domain in the interval 929–1025 (LCVPEKFPVS…KLIEKDCDYL (97 aa)).

The polypeptide is Ankyrin repeat-containing protein F37A4.4 (Caenorhabditis elegans).